An 84-amino-acid chain; its full sequence is U8-theraphotoxin-Hhn1g (84 aa).

A signal peptide spans 1–21 (MKVVLLVCLVWMMAMMELVSC). Intrachain disulfides connect cysteine 23–cysteine 35, cysteine 29–cysteine 44, cysteine 34–cysteine 67, cysteine 54–cysteine 75, and cysteine 69–cysteine 81.

The protein belongs to the AVIT (prokineticin) family. In terms of tissue distribution, expressed by the venom gland.

It is found in the secreted. This Cyriopagopus hainanus (Chinese bird spider) protein is U8-theraphotoxin-Hhn1g.